We begin with the raw amino-acid sequence, 252 residues long: Indole-3-glycerol phosphate synthase (252 aa).

The protein belongs to the TrpC family.

It catalyses the reaction 1-(2-carboxyphenylamino)-1-deoxy-D-ribulose 5-phosphate + H(+) = (1S,2R)-1-C-(indol-3-yl)glycerol 3-phosphate + CO2 + H2O. It participates in amino-acid biosynthesis; L-tryptophan biosynthesis; L-tryptophan from chorismate: step 4/5. The protein is Indole-3-glycerol phosphate synthase of Listeria welshimeri serovar 6b (strain ATCC 35897 / DSM 20650 / CCUG 15529 / CIP 8149 / NCTC 11857 / SLCC 5334 / V8).